The following is a 311-amino-acid chain: DNA replication terminus site-binding protein (311 aa).

It belongs to the Tus family.

The protein resides in the cytoplasm. Its function is as follows. Trans-acting protein required for termination of DNA replication. Binds to DNA replication terminator sequences (terA to terF) to prevent the passage of replication forks. The termination efficiency will be affected by the affinity of this protein for the terminator sequence. The polypeptide is DNA replication terminus site-binding protein (Yersinia pseudotuberculosis serotype O:1b (strain IP 31758)).